The sequence spans 401 residues: Nicotinate phosphoribosyltransferase (401 aa).

Phosphohistidine; by autocatalysis is present on His221.

Belongs to the NAPRTase family. Transiently phosphorylated on a His residue during the reaction cycle. Phosphorylation strongly increases the affinity for substrates and increases the rate of nicotinate D-ribonucleotide production. Dephosphorylation regenerates the low-affinity form of the enzyme, leading to product release.

It catalyses the reaction nicotinate + 5-phospho-alpha-D-ribose 1-diphosphate + ATP + H2O = nicotinate beta-D-ribonucleotide + ADP + phosphate + diphosphate. It functions in the pathway cofactor biosynthesis; NAD(+) biosynthesis; nicotinate D-ribonucleotide from nicotinate: step 1/1. In terms of biological role, catalyzes the synthesis of beta-nicotinate D-ribonucleotide from nicotinate and 5-phospho-D-ribose 1-phosphate at the expense of ATP. The chain is Nicotinate phosphoribosyltransferase from Yersinia enterocolitica serotype O:8 / biotype 1B (strain NCTC 13174 / 8081).